The chain runs to 726 residues: Sensory/regulatory protein RpfC (726 aa).

5 helical membrane-spanning segments follow: residues asparagine 23–arginine 40, threonine 52–leucine 72, isoleucine 95–isoleucine 115, alanine 128–lysine 148, and tyrosine 152–leucine 172. The Histidine kinase domain maps to asparagine 195–isoleucine 417. A Phosphohistidine; by autocatalysis modification is found at histidine 198. A Response regulatory domain is found at arginine 463–alanine 581. Aspartate 512 is modified (4-aspartylphosphate). In terms of domain architecture, HPt spans glycine 618–arginine 711. The residue at position 657 (histidine 657) is a Phosphohistidine.

At low DSF concentrations, interacts with RpfF. Autophosphorylated. Activation may require a sequential transfer of a phosphate group from a His in the primary transmitter domain, to an Asp in the receiver domain and to a His in the secondary transmitter domain.

The protein localises to the cell inner membrane. The enzyme catalyses ATP + protein L-histidine = ADP + protein N-phospho-L-histidine.. Binding of DSF to the sensor region causes allosteric change, which facilitates RpfC autophosphorylation. Its function is as follows. Hybrid sensor kinase that regulates diverse biological functions through two distinct molecular mechanisms. At low cell density, the extracellular concentration of the diffusible signaling factor (DSF) is below a threshold, and unphosphorylated RpfC is involved in the negative regulation of DSF synthesis, via direct interaction with the DSF synthase RpfF. Interaction prevents synthesis of DSF, which remains at a basal level. This activity does not involve the phosphorelay mechanism and is not dependent on RpfG. Is also member of the two-component regulatory system RpfG/RpfC, which is involved in the perception and response to DSF, which is essential for cell-cell signaling. At high cell density, the level of extracellular DSF increases and binding of DSF to the sensor region of RpfC causes autophosphorylation of RpfC, which results in the release of RpfF and the activation of RpfG via a four-step phosphorelay. Activation of RpfG leads to the positive regulation of biofilm dispersal and the production of virulence factors. This is Sensory/regulatory protein RpfC (rpfC) from Xanthomonas campestris pv. campestris (strain ATCC 33913 / DSM 3586 / NCPPB 528 / LMG 568 / P 25).